The chain runs to 509 residues: Lysine--tRNA ligase (509 aa).

Residues glutamate 395 and glutamate 402 each coordinate Mg(2+).

This sequence belongs to the class-II aminoacyl-tRNA synthetase family. In terms of assembly, homodimer. It depends on Mg(2+) as a cofactor.

It is found in the cytoplasm. It catalyses the reaction tRNA(Lys) + L-lysine + ATP = L-lysyl-tRNA(Lys) + AMP + diphosphate. This is Lysine--tRNA ligase from Fervidobacterium nodosum (strain ATCC 35602 / DSM 5306 / Rt17-B1).